The following is an 84-amino-acid chain: Small ribosomal subunit protein uS17 (84 aa).

This sequence belongs to the universal ribosomal protein uS17 family. Part of the 30S ribosomal subunit.

In terms of biological role, one of the primary rRNA binding proteins, it binds specifically to the 5'-end of 16S ribosomal RNA. The protein is Small ribosomal subunit protein uS17 of Clostridium kluyveri (strain NBRC 12016).